The primary structure comprises 936 residues: Protein NNF2 (936 aa).

Over 1 to 41 (MEEQFTNQKKVSHLQSLMNTKRSEQPTEFAKKHRFKDTLAL) the chain is Lumenal. Lys10 participates in a covalent cross-link: Glycyl lysine isopeptide (Lys-Gly) (interchain with G-Cter in ubiquitin). A helical membrane pass occupies residues 42–62 (FLVFLSFNHFTSLCLLVSFIV). At 63–120 (ATKCKDFLANCFIILFLSKKPSRHIGEVAHIDISTSKVTNGSSNRKSNSRFFGNSKNS) the chain is on the cytoplasmic side. The chain crosses the membrane as a helical span at residues 121-141 (FVIPIPVLICEILFAMLLKIY). At 142 to 245 (GGDYFVKPIK…FKMLGKHSDS (104 aa)) the chain is on the lumenal side. Residues 246-266 (MIYYLSFHILFFSFASSLLHP) form a helical membrane-spanning segment. Over 267–936 (HRQTAENKPL…NIHSLIGNSY (670 aa)) the chain is Cytoplasmic. 3 disordered regions span residues 297-351 (RISS…SNIL), 387-437 (GSNS…DFFS), and 512-533 (TSEN…QEKH). A compositionally biased stretch (low complexity) spans 299–308 (SSSSSVSADS). Positions 325 to 351 (LSSSNQTIHPSQQNNSPVPLSSHSNIL) are enriched in polar residues. Composition is skewed to low complexity over residues 394-405 (TTTTSTTTSPTT) and 414-428 (SLSN…SNGN). The segment covering 512–529 (TSENSLTPTNSNTSYVSN) has biased composition (polar residues).

The protein localises to the endoplasmic reticulum membrane. The protein is Protein NNF2 (NNF2) of Saccharomyces cerevisiae (strain ATCC 204508 / S288c) (Baker's yeast).